A 645-amino-acid polypeptide reads, in one-letter code: UPF0313 protein CLM_0251 (645 aa).

Positions 295 to 566 constitute a Radical SAM core domain; that stretch reads AIKEVKFSIT…RMQRALLQFS (272 aa). 3 residues coordinate [4Fe-4S] cluster: C309, C313, and C316. The disordered stretch occupies residues 598 to 645; the sequence is NKPYKKSHKKNNAKNNNNHYNKNNNYNKNKDISKKNKKNSLSKHKKRK. Over residues 600–609 the composition is skewed to basic residues; sequence PYKKSHKKNN. Over residues 610-624 the composition is skewed to low complexity; the sequence is AKNNNNHYNKNNNYN. Residues 632–645 are compositionally biased toward basic residues; that stretch reads KNKKNSLSKHKKRK.

This sequence belongs to the UPF0313 family. [4Fe-4S] cluster serves as cofactor.

The chain is UPF0313 protein CLM_0251 from Clostridium botulinum (strain Kyoto / Type A2).